Consider the following 325-residue polypeptide: Acetyl-coenzyme A carboxylase carboxyl transferase subunit alpha (325 aa).

A CoA carboxyltransferase C-terminal domain is found at 35–292 (EINKLEARLE…DDVLKRSLRE (258 aa)).

The protein belongs to the AccA family. In terms of assembly, acetyl-CoA carboxylase is a heterohexamer composed of biotin carboxyl carrier protein (AccB), biotin carboxylase (AccC) and two subunits each of ACCase subunit alpha (AccA) and ACCase subunit beta (AccD).

Its subcellular location is the cytoplasm. The enzyme catalyses N(6)-carboxybiotinyl-L-lysyl-[protein] + acetyl-CoA = N(6)-biotinyl-L-lysyl-[protein] + malonyl-CoA. The protein operates within lipid metabolism; malonyl-CoA biosynthesis; malonyl-CoA from acetyl-CoA: step 1/1. In terms of biological role, component of the acetyl coenzyme A carboxylase (ACC) complex. First, biotin carboxylase catalyzes the carboxylation of biotin on its carrier protein (BCCP) and then the CO(2) group is transferred by the carboxyltransferase to acetyl-CoA to form malonyl-CoA. In Anoxybacillus flavithermus (strain DSM 21510 / WK1), this protein is Acetyl-coenzyme A carboxylase carboxyl transferase subunit alpha.